Here is a 432-residue protein sequence, read N- to C-terminus: Myb family transcription factor EFM (432 aa).

A coiled-coil region spans residues 36-81; sequence LEDLLSRLEQERLKIDAFKRELPLCMQLLNNAVEVYKQQLEAYRAN. Polar residues-rich tracts occupy residues 123–139 and 187–197; these read SQSETKPKNIDSTTDQS and SPTNEHTNGQD. The disordered stretch occupies residues 123–237; sequence SQSETKPKNI…SQSNRKARRC (115 aa). Residues 201 to 231 show a composition bias toward low complexity; sequence ESMINNDNNYNNNNNNNSNSNGVSSTTSQSN. One can recognise an HTH myb-type domain in the interval 230–290; sequence SNRKARRCWS…HLQKYRLHTR (61 aa). The segment at residues 261 to 286 is a DNA-binding region (H-T-H motif); it reads PKQIRELMKVDGLTNDEVKSHLQKYR. Positions 354–412 are disordered; the sequence is FYTTPPPPQPLHHHHFQTFNGSSGGTASTDSTHHQVTDSPTVEGKSPESGGGERKGLAA.

As to quaternary structure, interacts with JMJ30, but not with SVP, FLC or CO. Specifically expressed in vascular tissues of cotyledons, rosette leaves and cauline leaves. Not detected in the vegetative shoot apical meristem.

Its subcellular location is the nucleus. Its function is as follows. Transcription factor acting as a flowering repressor, directly repressing FT expression in a dosage-dependent manner in the leaf vasculature. This Arabidopsis thaliana (Mouse-ear cress) protein is Myb family transcription factor EFM.